Reading from the N-terminus, the 219-residue chain is Dual specificity phosphatase 29 (219 aa).

The 149-residue stretch at His53–Gln201 folds into the Tyrosine-protein phosphatase domain. His145–Arg152 lines the substrate pocket. Cys146 serves as the catalytic Phosphocysteine intermediate.

This sequence belongs to the protein-tyrosine phosphatase family. Non-receptor class dual specificity subfamily. In terms of assembly, homodimer. Interacts with PRKAA2.

It is found in the cytoplasm. Its subcellular location is the nucleus. The enzyme catalyses O-phospho-L-tyrosyl-[protein] + H2O = L-tyrosyl-[protein] + phosphate. It carries out the reaction O-phospho-L-seryl-[protein] + H2O = L-seryl-[protein] + phosphate. The catalysed reaction is O-phospho-L-threonyl-[protein] + H2O = L-threonyl-[protein] + phosphate. Functionally, dual specificity phosphatase able to dephosphorylate phosphotyrosine, phosphoserine and phosphothreonine residues within the same substrate, with a preference for phosphotyrosine as a substrate. Involved in the modulation of intracellular signaling cascades. May regulate glucose metabolism by activating, AMPK, an energy sensor protein kinase. Affects MAP kinase signaling though modulation of the ERK1/2 cascade in skeletal muscle promoting muscle cell differentiation, development and atrophy. This Bos taurus (Bovine) protein is Dual specificity phosphatase 29 (DUSP29).